The primary structure comprises 175 residues: Riboflavin kinase (175 aa).

G54–K59 serves as a coordination point for CDP. Residues T83 and N85 each coordinate Mg(2+). FMN contacts are provided by T142 and E150. Residue F155–R158 participates in CDP binding.

This sequence belongs to the archaeal riboflavin kinase family. Requires Mg(2+) as cofactor.

It carries out the reaction riboflavin + CTP = CDP + FMN + H(+). It functions in the pathway cofactor biosynthesis; FMN biosynthesis; FMN from riboflavin (CTP route): step 1/1. Catalyzes the CTP-dependent phosphorylation of riboflavin (vitamin B2) to form flavin mononucleotide (FMN). The polypeptide is Riboflavin kinase (Saccharolobus solfataricus (strain ATCC 35092 / DSM 1617 / JCM 11322 / P2) (Sulfolobus solfataricus)).